Consider the following 323-residue polypeptide: Delta-aminolevulinic acid dehydratase (323 aa).

3 residues coordinate Zn(2+): Cys118, Cys120, and Cys128. Catalysis depends on Lys195, which acts as the Schiff-base intermediate with substrate. 5-aminolevulinate contacts are provided by Arg205 and Arg217. Residue Glu233 participates in Mg(2+) binding. Lys248 (schiff-base intermediate with substrate) is an active-site residue. Ser274 and Tyr313 together coordinate 5-aminolevulinate.

It belongs to the ALAD family. In terms of assembly, homooctamer. Zn(2+) serves as cofactor.

The enzyme catalyses 2 5-aminolevulinate = porphobilinogen + 2 H2O + H(+). Its pathway is porphyrin-containing compound metabolism; protoporphyrin-IX biosynthesis; coproporphyrinogen-III from 5-aminolevulinate: step 1/4. Functionally, catalyzes an early step in the biosynthesis of tetrapyrroles. Binds two molecules of 5-aminolevulinate per subunit, each at a distinct site, and catalyzes their condensation to form porphobilinogen. The polypeptide is Delta-aminolevulinic acid dehydratase (hemB) (Staphylococcus aureus).